The primary structure comprises 754 residues: Phosphoribosylformylglycinamidine synthase subunit PurL (754 aa).

H52 is a catalytic residue. Y55 and K95 together coordinate ATP. Position 97 (E97) interacts with Mg(2+). Substrate-binding positions include S98–H101 and R120. H99 (proton acceptor) is an active-site residue. Residue D121 coordinates Mg(2+). Residue Q244 coordinates substrate. Residue D272 coordinates Mg(2+). E316 to Q318 contributes to the substrate binding site. N504 and G541 together coordinate ATP. Residue N542 participates in Mg(2+) binding. S544 is a binding site for substrate.

This sequence belongs to the FGAMS family. As to quaternary structure, monomer. Part of the FGAM synthase complex composed of 1 PurL, 1 PurQ and 2 PurS subunits.

The protein resides in the cytoplasm. The enzyme catalyses N(2)-formyl-N(1)-(5-phospho-beta-D-ribosyl)glycinamide + L-glutamine + ATP + H2O = 2-formamido-N(1)-(5-O-phospho-beta-D-ribosyl)acetamidine + L-glutamate + ADP + phosphate + H(+). The protein operates within purine metabolism; IMP biosynthesis via de novo pathway; 5-amino-1-(5-phospho-D-ribosyl)imidazole from N(2)-formyl-N(1)-(5-phospho-D-ribosyl)glycinamide: step 1/2. Its function is as follows. Part of the phosphoribosylformylglycinamidine synthase complex involved in the purines biosynthetic pathway. Catalyzes the ATP-dependent conversion of formylglycinamide ribonucleotide (FGAR) and glutamine to yield formylglycinamidine ribonucleotide (FGAM) and glutamate. The FGAM synthase complex is composed of three subunits. PurQ produces an ammonia molecule by converting glutamine to glutamate. PurL transfers the ammonia molecule to FGAR to form FGAM in an ATP-dependent manner. PurS interacts with PurQ and PurL and is thought to assist in the transfer of the ammonia molecule from PurQ to PurL. This Salinibacter ruber (strain DSM 13855 / M31) protein is Phosphoribosylformylglycinamidine synthase subunit PurL.